Reading from the N-terminus, the 308-residue chain is tRNA pseudouridine synthase B (308 aa).

Residue aspartate 47 is the Nucleophile of the active site.

This sequence belongs to the pseudouridine synthase TruB family. Type 1 subfamily.

The enzyme catalyses uridine(55) in tRNA = pseudouridine(55) in tRNA. Responsible for synthesis of pseudouridine from uracil-55 in the psi GC loop of transfer RNAs. This chain is tRNA pseudouridine synthase B, found in Xanthomonas campestris pv. campestris (strain 8004).